The sequence spans 243 residues: 3-deoxy-manno-octulosonate cytidylyltransferase (243 aa).

It belongs to the KdsB family.

Its subcellular location is the cytoplasm. The enzyme catalyses 3-deoxy-alpha-D-manno-oct-2-ulosonate + CTP = CMP-3-deoxy-beta-D-manno-octulosonate + diphosphate. It functions in the pathway nucleotide-sugar biosynthesis; CMP-3-deoxy-D-manno-octulosonate biosynthesis; CMP-3-deoxy-D-manno-octulosonate from 3-deoxy-D-manno-octulosonate and CTP: step 1/1. It participates in bacterial outer membrane biogenesis; lipopolysaccharide biosynthesis. Functionally, activates KDO (a required 8-carbon sugar) for incorporation into bacterial lipopolysaccharide in Gram-negative bacteria. The polypeptide is 3-deoxy-manno-octulosonate cytidylyltransferase (Helicobacter pylori (strain P12)).